Consider the following 218-residue polypeptide: Glycoprotein UL1 (218 aa).

Residues 1–27 form the signal peptide; the sequence is MGVQCNSKLLLLAVLITIILSSILVQA. Residues 178–198 traverse the membrane as a helical segment; the sequence is VATHVGWTATVVIIICVLTYV.

This sequence belongs to the RL11 family.

It is found in the virion membrane. The sequence is that of Glycoprotein UL1 (UL1) from Homo sapiens (Human).